A 365-amino-acid polypeptide reads, in one-letter code: GTPase Obg (365 aa).

The region spanning 1-159 (MKFIDEARIE…RMLKLELKVL (159 aa)) is the Obg domain. Positions 160–334 (ADVGLLGMPN…LIYAIKDHLQ (175 aa)) constitute an OBG-type G domain. Residues 166-173 (GMPNAGKS), 191-195 (FTTLH), 213-216 (DIPG), 284-287 (NKLD), and 315-317 (SAL) each bind GTP. 2 residues coordinate Mg(2+): Ser-173 and Thr-193.

This sequence belongs to the TRAFAC class OBG-HflX-like GTPase superfamily. OBG GTPase family. In terms of assembly, monomer. Mg(2+) serves as cofactor.

The protein resides in the cytoplasm. Functionally, an essential GTPase which binds GTP, GDP and possibly (p)ppGpp with moderate affinity, with high nucleotide exchange rates and a fairly low GTP hydrolysis rate. Plays a role in control of the cell cycle, stress response, ribosome biogenesis and in those bacteria that undergo differentiation, in morphogenesis control. The sequence is that of GTPase Obg from Cupriavidus taiwanensis (strain DSM 17343 / BCRC 17206 / CCUG 44338 / CIP 107171 / LMG 19424 / R1) (Ralstonia taiwanensis (strain LMG 19424)).